The primary structure comprises 505 residues: DEAD-box ATP-dependent RNA helicase 41 (505 aa).

The HIT-type zinc finger occupies 27 to 56 (GEPKCVICSRYGEYICDETNDDVCSLECKQ). The Q motif signature appears at 110–138 (LTFTSCGLPPKLLLNLETAGYDFPTPIQM). In terms of domain architecture, Helicase ATP-binding spans 141-318 (IPAALTGKSL…GSLAKEIILV (178 aa)). ATP is bound at residue 154 to 161 (ADTGSGKT). The DEAD box signature appears at 267-270 (DEVD). Residues 342–492 (KKQKLFDILR…AIPKELINLT (151 aa)) form the Helicase C-terminal domain.

The protein belongs to the DEAD box helicase family. DDX59 subfamily.

It catalyses the reaction ATP + H2O = ADP + phosphate + H(+). The chain is DEAD-box ATP-dependent RNA helicase 41 (RH41) from Arabidopsis thaliana (Mouse-ear cress).